The sequence spans 255 residues: Thiazole synthase (255 aa).

The active-site Schiff-base intermediate with DXP is Lys97. Residues Gly158, 184–185 (AG), and 206–207 (NT) contribute to the 1-deoxy-D-xylulose 5-phosphate site.

It belongs to the ThiG family. Homotetramer. Forms heterodimers with either ThiH or ThiS.

The protein localises to the cytoplasm. The catalysed reaction is [ThiS sulfur-carrier protein]-C-terminal-Gly-aminoethanethioate + 2-iminoacetate + 1-deoxy-D-xylulose 5-phosphate = [ThiS sulfur-carrier protein]-C-terminal Gly-Gly + 2-[(2R,5Z)-2-carboxy-4-methylthiazol-5(2H)-ylidene]ethyl phosphate + 2 H2O + H(+). It participates in cofactor biosynthesis; thiamine diphosphate biosynthesis. Its function is as follows. Catalyzes the rearrangement of 1-deoxy-D-xylulose 5-phosphate (DXP) to produce the thiazole phosphate moiety of thiamine. Sulfur is provided by the thiocarboxylate moiety of the carrier protein ThiS. In vitro, sulfur can be provided by H(2)S. The polypeptide is Thiazole synthase (Acetivibrio thermocellus (strain ATCC 27405 / DSM 1237 / JCM 9322 / NBRC 103400 / NCIMB 10682 / NRRL B-4536 / VPI 7372) (Clostridium thermocellum)).